The chain runs to 415 residues: Serine hydroxymethyltransferase (415 aa).

Residues Leu117 and 121-123 contribute to the (6S)-5,6,7,8-tetrahydrofolate site; that span reads GHL. Lys226 is subject to N6-(pyridoxal phosphate)lysine. Position 349–351 (349–351) interacts with (6S)-5,6,7,8-tetrahydrofolate; sequence SPF.

This sequence belongs to the SHMT family. Homodimer. The cofactor is pyridoxal 5'-phosphate.

The protein localises to the cytoplasm. It carries out the reaction (6R)-5,10-methylene-5,6,7,8-tetrahydrofolate + glycine + H2O = (6S)-5,6,7,8-tetrahydrofolate + L-serine. The protein operates within one-carbon metabolism; tetrahydrofolate interconversion. It participates in amino-acid biosynthesis; glycine biosynthesis; glycine from L-serine: step 1/1. Functionally, catalyzes the reversible interconversion of serine and glycine with tetrahydrofolate (THF) serving as the one-carbon carrier. This reaction serves as the major source of one-carbon groups required for the biosynthesis of purines, thymidylate, methionine, and other important biomolecules. Also exhibits THF-independent aldolase activity toward beta-hydroxyamino acids, producing glycine and aldehydes, via a retro-aldol mechanism. The protein is Serine hydroxymethyltransferase of Geobacter sp. (strain M21).